Reading from the N-terminus, the 876-residue chain is Importin subunit beta-1 (876 aa).

Met1 carries the N-acetylmethionine modification. HEAT repeat units lie at residues 3–29 (LITILEKTVSPDRLELEAAQKFLERAA), 32–62 (NLPTFLVELSRVLANPGNSQVARVAAGLQIK), 85–120 (ANARREVKNYVLQTLGTETYRPSSASQCVAGIACAE), 129–160 (LIPQLVANVTNPNSTEHMKESTLEAIGYICQD), and 170–201 (SNEILTAIIQGMRKEEPSNNVKLAATNALLNS). Ser12 bears the Phosphoserine mark. The Importin N-terminal domain occupies 21-101 (AQKFLERAAV…KNYVLQTLGT (81 aa)). Lys211 bears the N6-acetyllysine mark. HEAT repeat units lie at residues 212-247 (ESERHFIMQVVCEATQCPDTRVRVAALQNLVKIMSL), 260-302 (LFAI…EAAE), 314-359 (YAKG…STCC), 363-392 (IVPHVLPFIKEHIKNPDWRYRDAAVMAFGS), 399-438 (PNQLKPLVIQAMPTLIELMKDPSVVVRDTTAWTVGRICEL), 449-485 (LAPLLQCLIEGLSAEPRVASNVCWAFSSLAEAAYEAA), 500-537 (SSSFELIVQKLLETTDRPDGHQNNLRSSAYESLMEIVK), 544-592 (YPAV…QNVL), 597-639 (HQDA…VEVL), 644-680 (LKYMEAFKPFLGIGLKNYAEYQVCLAAVGLVGDLCRA), 686-724 (LPFCDEVMQLLLENLGNENVHRSVKPQILSVFGDIALAI), 729-777 (KKYL…QGLK), 785-828 (PDVM…LCTA), and 834-875 (LKLV…LKNQ). Residues 286 to 462 (VCDEEMDLAI…LQCLIEGLSA (177 aa)) form an essential for high affinity interaction with RPL23A region. Residues 329–342 (TLTKQDENDDDDDW) are IAB-binding. The tract at residues 334-419 (DENDDDDDWN…MPTLIELMKD (86 aa)) is ran-GTP binding. Residues Lys835 and Lys867 each carry the N6-acetyllysine modification.

This sequence belongs to the importin beta family. Importin beta-1 subfamily. As to quaternary structure, forms a complex with an importin alpha subunit. Interacts with XPO1. Forms a heterodimer with IPO7. The KPNB1/IPO7 heterodimer interacts with H1 histone. Interacts with SNUPN. Interacts with H2A, H2B, H3 and H4 histones. Component of an import snRNP complex composed of KPNB1, SNUPN, SMN1 and ZNF259. Component of a nuclear export receptor complex composed of KPNB1, Ran, SNUPN and XPO1. Interacts with SRY. Interacts with PRKCI/atypical protein kinase C iota. Interacts with KPNA2. Interacts with KPNA7. Interacts with SNAI1 (via zinc fingers) and SNAI2 (via zinc fingers). Interacts with SLC35G1 and STIM1. Interacts with DCAF8. Interacts with RAN. Interacts with NUMA1 (via C-terminus); this interaction is inhibited by RanGTP. Interacts with ZBED1/hDREF; required for nuclear import of ZBED1/hDREF. Interacts with SRP19. Interacts with RPL23A (via BIB domain), RPS7 and RPL5. In terms of processing, mono-ADP-ribosylated by PARP16.

It is found in the cytoplasm. It localises to the nucleus envelope. In terms of biological role, functions in nuclear protein import, either in association with an adapter protein, like an importin-alpha subunit, which binds to nuclear localization signals (NLS) in cargo substrates, or by acting as autonomous nuclear transport receptor. Acting autonomously, serves itself as NLS receptor. Docking of the importin/substrate complex to the nuclear pore complex (NPC) is mediated by KPNB1 through binding to nucleoporin FxFG repeats and the complex is subsequently translocated through the pore by an energy requiring, Ran-dependent mechanism. At the nucleoplasmic side of the NPC, Ran binds to importin-beta and the three components separate and importin-alpha and -beta are re-exported from the nucleus to the cytoplasm where GTP hydrolysis releases Ran from importin. The directionality of nuclear import is thought to be conferred by an asymmetric distribution of the GTP- and GDP-bound forms of Ran between the cytoplasm and nucleus. Mediates autonomously the nuclear import of ribosomal proteins RPL23A, RPS7 and RPL5. In association with IPO7, mediates the nuclear import of H1 histone. In vitro, mediates nuclear import of H2A, H2B, H3 and H4 histones. Imports MRTFA, SNAI1 and PRKCI into the nucleus. This is Importin subunit beta-1 (Kpnb1) from Mus musculus (Mouse).